The sequence spans 412 residues: rRNA methyltransferase 1, mitochondrial (412 aa).

The N-terminal 20 residues, 1–20, are a transit peptide targeting the mitochondrion; that stretch reads MTSLTNAVFKRYLAVTPSAH.

It belongs to the class IV-like SAM-binding methyltransferase superfamily. RNA methyltransferase TrmH family.

It localises to the mitochondrion. The enzyme catalyses guanosine(2270) in 21S rRNA + S-adenosyl-L-methionine = 2'-O-methylguanosine(2270) in 21S rRNA + S-adenosyl-L-homocysteine + H(+). S-adenosyl-L-methionine-dependent 2'-O-ribose methyltransferase that catalyzes the formation of 2'-O-methylguanosine at position 2270 (Gm2270) in the 21S mitochondrial large subunit ribosomal RNA (mtLSU rRNA), a universally conserved modification in the peptidyl transferase domain of the mtLSU rRNA. This modification seems to be important for the normal accumulation of the mitochondrial large ribosomal subunit. The sequence is that of rRNA methyltransferase 1, mitochondrial from Saccharomyces cerevisiae (strain ATCC 204508 / S288c) (Baker's yeast).